The sequence spans 287 residues: Ribosomal RNA small subunit methyltransferase A (287 aa).

The S-adenosyl-L-methionine site is built by N28, L30, G55, E76, D101, and N125.

It belongs to the class I-like SAM-binding methyltransferase superfamily. rRNA adenine N(6)-methyltransferase family. RsmA subfamily.

It localises to the cytoplasm. The enzyme catalyses adenosine(1518)/adenosine(1519) in 16S rRNA + 4 S-adenosyl-L-methionine = N(6)-dimethyladenosine(1518)/N(6)-dimethyladenosine(1519) in 16S rRNA + 4 S-adenosyl-L-homocysteine + 4 H(+). Functionally, specifically dimethylates two adjacent adenosines (A1518 and A1519) in the loop of a conserved hairpin near the 3'-end of 16S rRNA in the 30S particle. May play a critical role in biogenesis of 30S subunits. The protein is Ribosomal RNA small subunit methyltransferase A of Alkaliphilus metalliredigens (strain QYMF).